Reading from the N-terminus, the 2194-residue chain is Genome polyprotein (2194 aa).

The N-myristoyl glycine; by host moiety is linked to residue Gly2. Over 2–1504 (GAQVSTQKTG…HVSRAFICLQ (1503 aa)) the chain is Cytoplasmic. The interval 566–582 (LYQNDPEGALNKAVGRV) is amphipathic alpha-helix. Residues His881 and Asp899 each act as for protease 2A activity in the active site. Residues Cys916 and Cys918 each coordinate Zn(2+). Catalysis depends on Cys970, which acts as the For protease 2A activity. Zn(2+) is bound by residues Cys976 and His978. The segment at 1110 to 1182 (NNNWLKKFTE…EQSAPSQSDQ (73 aa)) is membrane-binding. The segment at 1110 to 1248 (NNNWLKKFTE…SPGAGKSVAT (139 aa)) is oligomerization. Residues 1131–1135 (AIKIQ) are RNA-binding. The SF3 helicase domain occupies 1214–1370 (EKKMSNYIQF…SMYSQNGKIN (157 aa)). Zn(2+) contacts are provided by Cys1378, Cys1390, and Cys1395. The C4-type; degenerate zinc finger occupies 1378–1395 (CDEECCPVNFKRCCPLVC). Residues 1422–1429 (EYNHRHSV) are RNA-binding. Residues 1433-1438 (LEALFQ) form an oligomerization region. Residues 1505 to 1520 (ALTTFVSVAGIIYIIY) lie within the membrane without spanning it. The Cytoplasmic portion of the chain corresponds to 1521-2194 (KLFAGFQGAY…TLRRKWLDSF (674 aa)). At Tyr1530 the chain carries O-(5'-phospho-RNA)-tyrosine. The Peptidase C3 domain occupies 1550–1728 (GPAFEFAVAM…FSAALLRHYF (179 aa)). Catalysis depends on for protease 3C activity residues His1589, Glu1620, and Cys1696. The 117-residue stretch at 1959–2075 (GHLIAFDYSG…SYPHPIDASL (117 aa)) folds into the RdRp catalytic domain. Residues Asp1965 and Asp2061 each contribute to the Mg(2+) site.

It belongs to the picornaviruses polyprotein family. Interacts with capsid protein VP1 and capsid protein VP3 to form heterotrimeric protomers. As to quaternary structure, interacts with capsid protein VP0, and capsid protein VP3 to form heterotrimeric protomers. Five protomers subsequently associate to form pentamers which serve as building blocks for the capsid. Interacts with capsid protein VP2, capsid protein VP3 and capsid protein VP4 following cleavage of capsid protein VP0. In terms of assembly, interacts with capsid protein VP1 and capsid protein VP3 in the mature capsid. Interacts with capsid protein VP0 and capsid protein VP1 to form heterotrimeric protomers. Five protomers subsequently associate to form pentamers which serve as building blocks for the capsid. Interacts with capsid protein VP4 in the mature capsid. Interacts with protein 2C; this interaction may be important for virion morphogenesis. As to quaternary structure, interacts with capsid protein VP1 and capsid protein VP3. In terms of assembly, homodimer. Homohexamer; forms a hexameric ring structure with 6-fold symmetry characteristic of AAA+ ATPases. Interacts (via N-terminus) with host RTN3 (via reticulon domain); this interaction is important for viral replication. Interacts with capsid protein VP3; this interaction may be important for virion morphogenesis. As to quaternary structure, interacts with protein 3CD. In terms of assembly, homodimer. Interacts with host GBF1. Interacts (via GOLD domain) with host ACBD3 (via GOLD domain); this interaction allows the formation of a viral protein 3A/ACBD3 heterotetramer with a 2:2 stoichiometry, which will stimulate the recruitment of host PI4KB in order to synthesize PI4P at the viral RNA replication sites. Interacts with RNA-directed RNA polymerase. As to quaternary structure, interacts with protein 3AB and with RNA-directed RNA polymerase. In terms of assembly, interacts with Viral protein genome-linked and with protein 3CD. It depends on Mg(2+) as a cofactor. In terms of processing, specific enzymatic cleavages in vivo by the viral proteases yield processing intermediates and the mature proteins. Myristoylation is required for the formation of pentamers during virus assembly. Further assembly of 12 pentamers and a molecule of genomic RNA generates the provirion. Post-translationally, during virion maturation, immature virions are rendered infectious following cleavage of VP0 into VP4 and VP2. This maturation seems to be an autocatalytic event triggered by the presence of RNA in the capsid and it is followed by a conformational change infectious virion. In terms of processing, myristoylation is required during RNA encapsidation and formation of the mature virus particle. VPg is uridylylated by the polymerase into VPg-pUpU. This acts as a nucleotide-peptide primer for the genomic RNA replication.

The protein localises to the virion. It localises to the host cytoplasm. It is found in the host cytoplasmic vesicle membrane. The protein resides in the host nucleus. It carries out the reaction a ribonucleoside 5'-triphosphate + H2O = a ribonucleoside 5'-diphosphate + phosphate + H(+). The catalysed reaction is Selective cleavage of Tyr-|-Gly bond in the picornavirus polyprotein.. The enzyme catalyses RNA(n) + a ribonucleoside 5'-triphosphate = RNA(n+1) + diphosphate. It catalyses the reaction Selective cleavage of Gln-|-Gly bond in the poliovirus polyprotein. In other picornavirus reactions Glu may be substituted for Gln, and Ser or Thr for Gly.. With respect to regulation, replication or transcription is subject to high level of random mutations by the nucleotide analog ribavirin. Its function is as follows. Forms an icosahedral capsid of pseudo T=3 symmetry with capsid proteins VP2 and VP3. The capsid is 300 Angstroms in diameter, composed of 60 copies of each capsid protein and enclosing the viral positive strand RNA genome. Capsid protein VP1 mainly forms the vertices of the capsid. Capsid protein VP1 interacts with host cell receptor to provide virion attachment to target host cells. This attachment induces virion internalization. Tyrosine kinases are probably involved in the entry process. After binding to its receptor, the capsid undergoes conformational changes. Capsid protein VP1 N-terminus (that contains an amphipathic alpha-helix) and capsid protein VP4 are externalized. Together, they shape a pore in the host membrane through which viral genome is translocated to host cell cytoplasm. Functionally, forms an icosahedral capsid of pseudo T=3 symmetry with capsid proteins VP2 and VP3. The capsid is 300 Angstroms in diameter, composed of 60 copies of each capsid protein and enclosing the viral positive strand RNA genome. In terms of biological role, lies on the inner surface of the capsid shell. After binding to the host receptor, the capsid undergoes conformational changes. Capsid protein VP4 is released, Capsid protein VP1 N-terminus is externalized, and together, they shape a pore in the host membrane through which the viral genome is translocated into the host cell cytoplasm. Component of immature procapsids, which is cleaved into capsid proteins VP4 and VP2 after maturation. Allows the capsid to remain inactive before the maturation step. Its function is as follows. Cysteine protease that cleaves viral polyprotein and specific host proteins. It is responsible for the autocatalytic cleavage between the P1 and P2 regions, which is the first cleavage occurring in the polyprotein. Also cleaves the host translation initiation factor EIF4G1, in order to shut down the capped cellular mRNA translation. Inhibits the host nucleus-cytoplasm protein and RNA trafficking by cleaving host members of the nuclear pores. Counteracts stress granule formation probably by antagonizing its assembly or promoting its dissassembly. Functionally, plays an essential role in the virus replication cycle by acting as a viroporin. Creates a pore in the host endoplasmic reticulum and as a consequence releases Ca2+ in the cytoplasm of infected cell. In turn, high levels of cytoplasmic calcium may trigger membrane trafficking and transport of viral ER-associated proteins to viroplasms, sites of viral genome replication. In terms of biological role, induces and associates with structural rearrangements of intracellular membranes. Displays RNA-binding, nucleotide binding and NTPase activities. May play a role in virion morphogenesis and viral RNA encapsidation by interacting with the capsid protein VP3. Localizes the viral replication complex to the surface of membranous vesicles. Together with protein 3CD binds the Cis-Active RNA Element (CRE) which is involved in RNA synthesis initiation. Acts as a cofactor to stimulate the activity of 3D polymerase, maybe through a nucleid acid chaperone activity. Its function is as follows. Localizes the viral replication complex to the surface of membranous vesicles. It inhibits host cell endoplasmic reticulum-to-Golgi apparatus transport and causes the disassembly of the Golgi complex, possibly through GBF1 interaction. This would result in depletion of MHC, trail receptors and IFN receptors at the host cell surface. Plays an essential role in viral RNA replication by recruiting ACBD3 and PI4KB at the viral replication sites, thereby allowing the formation of the rearranged membranous structures where viral replication takes place. Functionally, acts as a primer for viral RNA replication and remains covalently bound to viral genomic RNA. VPg is uridylylated prior to priming replication into VPg-pUpU. The oriI viral genomic sequence may act as a template for this. The VPg-pUpU is then used as primer on the genomic RNA poly(A) by the RNA-dependent RNA polymerase to replicate the viral genome. During genome replication, the VPg-RNA linkage is removed by the host TDP2, thereby accelerating replication. During the late stage of the replication cycle, host TDP2 is excluded from sites of viral RNA synthesis and encapsidation, allowing for the generation of progeny virions. In terms of biological role, involved in the viral replication complex and viral polypeptide maturation. It exhibits protease activity with a specificity and catalytic efficiency that is different from protease 3C. Protein 3CD lacks polymerase activity. Protein 3CD binds to the 5'UTR of the viral genome. Replicates the viral genomic RNA on the surface of intracellular membranes. May form linear arrays of subunits that propagate along a strong head-to-tail interaction called interface-I. Covalently attaches UMP to a tyrosine of VPg, which is used to prime RNA synthesis. The positive stranded RNA genome is first replicated at virus induced membranous vesicles, creating a dsRNA genomic replication form. This dsRNA is then used as template to synthesize positive stranded RNA genomes. ss(+)RNA genomes are either translated, replicated or encapsidated. Its function is as follows. Major viral protease that mediates proteolytic processing of the polyprotein. Cleaves host EIF5B, contributing to host translation shutoff. Also cleaves host PABPC1, contributing to host translation shutoff. Cleaves host NLRP1, triggers host N-glycine-mediated degradation of the autoinhibitory NLRP1 N-terminal fragment. This Homo sapiens (Human) protein is Genome polyprotein.